Here is a 67-residue protein sequence, read N- to C-terminus: DNA-directed RNA polymerase subunit omega (67 aa).

It belongs to the RNA polymerase subunit omega family. As to quaternary structure, the RNAP catalytic core consists of 2 alpha, 1 beta, 1 beta' and 1 omega subunit. When a sigma factor is associated with the core the holoenzyme is formed, which can initiate transcription.

It carries out the reaction RNA(n) + a ribonucleoside 5'-triphosphate = RNA(n+1) + diphosphate. Functionally, promotes RNA polymerase assembly. Latches the N- and C-terminal regions of the beta' subunit thereby facilitating its interaction with the beta and alpha subunits. The chain is DNA-directed RNA polymerase subunit omega from Dictyoglomus turgidum (strain DSM 6724 / Z-1310).